Here is an 885-residue protein sequence, read N- to C-terminus: Protein kintoun (885 aa).

Disordered stretches follow at residues 208 to 235 (LSKNPTAEEKEPHPLEHMYPKKPEADAG), 371 to 390 (LSREDSGVELNSNGESPVED), 607 to 636 (ELQQLHHQKKLNKKQRKRNKKQRSLSESAC), 644 to 663 (EHHEQPMDTLKLPHRKQRSY), 781 to 806 (RRLSEGDSADYVEVDSTHGSGDQPAH), and 819 to 871 (NNNH…MMFE). The span at 213 to 232 (TAEEKEPHPLEHMYPKKPEA) shows a compositional bias: basic and acidic residues. The residue at position 376 (Ser376) is a Phosphoserine. Over residues 612 to 629 (HHQKKLNKKQRKRNKKQR) the composition is skewed to basic residues. At Ser784 the chain carries Phosphoserine. Positions 824–837 (HVKDNKKQSLHDSG) are enriched in basic and acidic residues. Low complexity predominate over residues 842–855 (NGSINNKNNHSNEN).

This sequence belongs to the PIH1 family. Kintoun subfamily. Interacts with Pp1alpha-96A, Pp1-87B, Pp1-13C and flw.

Its subcellular location is the cytoplasm. Functionally, required for cytoplasmic pre-assembly of axonemal dyneins, thereby playing a central role in motility in cilia and flagella. Involved in pre-assembly of dynein arm complexes in the cytoplasm before intraflagellar transport loads them for the ciliary compartment. This Drosophila mojavensis (Fruit fly) protein is Protein kintoun.